The chain runs to 272 residues: Shikimate dehydrogenase (NADP(+)) (272 aa).

Residues 14–16 (SKS) and T61 contribute to the shikimate site. K65 acts as the Proton acceptor in catalysis. Residue E77 participates in NADP(+) binding. Shikimate contacts are provided by N86 and D102. NADP(+) contacts are provided by residues 126–130 (GAGGA), 149–154 (NRTVSR), and M213. Y215 provides a ligand contact to shikimate. G237 provides a ligand contact to NADP(+).

It belongs to the shikimate dehydrogenase family. As to quaternary structure, homodimer.

It catalyses the reaction shikimate + NADP(+) = 3-dehydroshikimate + NADPH + H(+). It functions in the pathway metabolic intermediate biosynthesis; chorismate biosynthesis; chorismate from D-erythrose 4-phosphate and phosphoenolpyruvate: step 4/7. Its function is as follows. Involved in the biosynthesis of the chorismate, which leads to the biosynthesis of aromatic amino acids. Catalyzes the reversible NADPH linked reduction of 3-dehydroshikimate (DHSA) to yield shikimate (SA). This chain is Shikimate dehydrogenase (NADP(+)), found in Escherichia coli O6:H1 (strain CFT073 / ATCC 700928 / UPEC).